Reading from the N-terminus, the 116-residue chain is Class I hydrophobin 1 (116 aa).

The first 19 residues, 1 to 19, serve as a signal peptide directing secretion; it reads MLFKQAILVATTLTTLAVA. Intrachain disulfides connect Cys-35/Cys-95, Cys-42/Cys-89, Cys-43/Cys-76, and Cys-96/Cys-109. N-linked (GlcNAc...) asparagine glycosylation is found at Asn-44 and Asn-100.

This sequence belongs to the fungal hydrophobin family. In terms of assembly, self-assembles to form functional amyloid fibrils called rodlets. Self-assembly into fibrillar rodlets occurs spontaneously at hydrophobic:hydrophilic interfaces and the rodlets further associate laterally to form amphipathic monolayers.

It is found in the secreted. The protein resides in the cell wall. Aerial growth, conidiation, and dispersal of filamentous fungi in the environment rely upon a capability of their secreting small amphipathic proteins called hydrophobins (HPBs) with low sequence identity. Class I can self-assemble into an outermost layer of rodlet bundles on aerial cell surfaces, conferring cellular hydrophobicity that supports fungal growth, development and dispersal; whereas Class II form highly ordered films at water-air interfaces through intermolecular interactions but contribute nothing to the rodlet structure. The polypeptide is Class I hydrophobin 1 (Pleurotus ostreatus (strain PC15) (Oyster mushroom)).